A 987-amino-acid polypeptide reads, in one-letter code: UPF0182 protein Lxx09300 (987 aa).

The next 7 helical transmembrane spans lie at 17–37 (VWTTLGVIVALVILFFIFAGL), 59–79 (AAIAMFFVGFLGMALPLWVVI), 108–128 (RLAMYGIPIVFGIFAGVSAAS), 167–187 (VGFASAVVLISLLATLATCYL), 206–226 (VQISVIAAVYLLLQGVSVWLD), 256–276 (AVLAVAAVFVALLFAVTAFTG), and 283–303 (VGTALLIVAALVIGAIYPWAI). Disordered stretches follow at residues 700–719 (RDDAWTTPNDPTSSPTDPTL) and 886–947 (TAGD…ALQQ). Over residues 705 to 719 (TTPNDPTSSPTDPTL) the composition is skewed to low complexity. A compositionally biased stretch (gly residues) spans 897 to 932 (GGSGGGSSGDAGSSAGGGSSGGGGSSAGGSSSGSGS). Over residues 933–947 (SGTQSNAALQRALQQ) the composition is skewed to low complexity.

The protein belongs to the UPF0182 family.

It is found in the cell membrane. This Leifsonia xyli subsp. xyli (strain CTCB07) protein is UPF0182 protein Lxx09300.